The primary structure comprises 812 residues: 5-methyltetrahydropteroyltriglutamate--homocysteine methyltransferase 3, chloroplastic (812 aa).

A chloroplast-targeting transit peptide spans 1–33 (MGQLALQRLQPLASLPRRPPSLPPPSSATPSLP). The tract at residues 13–33 (ASLPRRPPSLPPPSSATPSLP) is disordered. The segment covering 17–27 (RRPPSLPPPSS) has biased composition (pro residues). Residues lysine 66 and asparagine 164 each coordinate 5-methyltetrahydropteroyltri-L-glutamate. A disordered region spans residues 430-456 (MRQASRRSSPRVTNAAVQQDVDAVKKS). L-homocysteine-binding positions include 485–487 (IGS) and glutamate 538. Residues 485–487 (IGS) and glutamate 538 contribute to the L-methionine site. 5-methyltetrahydropteroyltri-L-glutamate contacts are provided by residues aspartate 543, tyrosine 566, 569-570 (RC), and tryptophan 615. Aspartate 653 provides a ligand contact to L-homocysteine. Aspartate 653 contributes to the L-methionine binding site. The Zn(2+) site is built by histidine 695, cysteine 697, histidine 706, aspartate 710, and glutamate 719. The Proton donor role is filled by histidine 749. Cysteine 781 serves as a coordination point for Zn(2+).

This sequence belongs to the vitamin-B12 independent methionine synthase family. It depends on Zn(2+) as a cofactor. Expressed in seeds.

It localises to the plastid. Its subcellular location is the chloroplast. It catalyses the reaction 5-methyltetrahydropteroyltri-L-glutamate + L-homocysteine = tetrahydropteroyltri-L-glutamate + L-methionine. It participates in amino-acid biosynthesis; L-methionine biosynthesis via de novo pathway; L-methionine from L-homocysteine (MetE route): step 1/1. In terms of biological role, catalyzes the transfer of a methyl group from 5-methyltetrahydrofolate to homocysteine resulting in methionine formation. The protein is 5-methyltetrahydropteroyltriglutamate--homocysteine methyltransferase 3, chloroplastic (MS3) of Arabidopsis thaliana (Mouse-ear cress).